Consider the following 297-residue polypeptide: Phosphatidylserine decarboxylase proenzyme (297 aa).

Catalysis depends on charge relay system; for autoendoproteolytic cleavage activity residues Asp-100, His-157, and Ser-263. The Schiff-base intermediate with substrate; via pyruvic acid; for decarboxylase activity role is filled by Ser-263. Ser-263 is modified (pyruvic acid (Ser); by autocatalysis).

Belongs to the phosphatidylserine decarboxylase family. PSD-B subfamily. Prokaryotic type I sub-subfamily. As to quaternary structure, heterodimer of a large membrane-associated beta subunit and a small pyruvoyl-containing alpha subunit. Requires pyruvate as cofactor. In terms of processing, is synthesized initially as an inactive proenzyme. Formation of the active enzyme involves a self-maturation process in which the active site pyruvoyl group is generated from an internal serine residue via an autocatalytic post-translational modification. Two non-identical subunits are generated from the proenzyme in this reaction, and the pyruvate is formed at the N-terminus of the alpha chain, which is derived from the carboxyl end of the proenzyme. The autoendoproteolytic cleavage occurs by a canonical serine protease mechanism, in which the side chain hydroxyl group of the serine supplies its oxygen atom to form the C-terminus of the beta chain, while the remainder of the serine residue undergoes an oxidative deamination to produce ammonia and the pyruvoyl prosthetic group on the alpha chain. During this reaction, the Ser that is part of the protease active site of the proenzyme becomes the pyruvoyl prosthetic group, which constitutes an essential element of the active site of the mature decarboxylase.

It is found in the cell membrane. It catalyses the reaction a 1,2-diacyl-sn-glycero-3-phospho-L-serine + H(+) = a 1,2-diacyl-sn-glycero-3-phosphoethanolamine + CO2. Its pathway is phospholipid metabolism; phosphatidylethanolamine biosynthesis; phosphatidylethanolamine from CDP-diacylglycerol: step 2/2. Catalyzes the formation of phosphatidylethanolamine (PtdEtn) from phosphatidylserine (PtdSer). This chain is Phosphatidylserine decarboxylase proenzyme, found in Glaesserella parasuis serovar 5 (strain SH0165) (Haemophilus parasuis).